A 307-amino-acid polypeptide reads, in one-letter code: Putative F-box protein PP2-B6 (307 aa).

Residues 42 to 88 (HSPFDDLPEDCISNIISFTSPRDVCVSASVSKSFAHAVQCDSIWEKF) enclose the F-box domain.

This chain is Putative F-box protein PP2-B6 (PP2B6), found in Arabidopsis thaliana (Mouse-ear cress).